A 284-amino-acid polypeptide reads, in one-letter code: MSDTNTEKPELVSLNKLSEMRTNIGMVKRYWNPKMGFFIEPERKHNNDLLKLDLQYQALKTAYNFIKDVVKNHGQILFVGTKNDYVKKLVIDIAKRVNVAYITQRWLGGTLTNFKTLSISINKLNKLVEQQKQNANDLTKKENLLLSREIERLEKFFGGVKNLKRLPNLIVIDDPVYEKNAVLEANSLKIPVVALCNTNTNPELVDFIIPANNHQPQSTCLLMNLLADAIAEAKGFETLYAYKPDEQIQIEIPPKQERQVINRSNTRNITNQRLNINRQQQETL.

This sequence belongs to the universal ribosomal protein uS2 family.

The chain is Small ribosomal subunit protein uS2 (rpsB) from Mycoplasma genitalium (strain ATCC 33530 / DSM 19775 / NCTC 10195 / G37) (Mycoplasmoides genitalium).